A 267-amino-acid polypeptide reads, in one-letter code: Type III pantothenate kinase (267 aa).

Residue 6–13 (DSGNSRLK) coordinates ATP. Residues tyrosine 96 and 103 to 106 (GADR) contribute to the substrate site. Residue aspartate 105 is the Proton acceptor of the active site. Threonine 131 lines the ATP pocket. Residue threonine 181 coordinates substrate.

Belongs to the type III pantothenate kinase family. As to quaternary structure, homodimer. NH4(+) serves as cofactor. It depends on K(+) as a cofactor.

It localises to the cytoplasm. The enzyme catalyses (R)-pantothenate + ATP = (R)-4'-phosphopantothenate + ADP + H(+). It participates in cofactor biosynthesis; coenzyme A biosynthesis; CoA from (R)-pantothenate: step 1/5. In terms of biological role, catalyzes the phosphorylation of pantothenate (Pan), the first step in CoA biosynthesis. The sequence is that of Type III pantothenate kinase from Bordetella bronchiseptica (strain ATCC BAA-588 / NCTC 13252 / RB50) (Alcaligenes bronchisepticus).